The following is a 317-amino-acid chain: Porphobilinogen deaminase (317 aa).

Cysteine 245 bears the S-(dipyrrolylmethanemethyl)cysteine mark.

The protein belongs to the HMBS family. Monomer. It depends on dipyrromethane as a cofactor.

The enzyme catalyses 4 porphobilinogen + H2O = hydroxymethylbilane + 4 NH4(+). Its pathway is porphyrin-containing compound metabolism; protoporphyrin-IX biosynthesis; coproporphyrinogen-III from 5-aminolevulinate: step 2/4. It functions in the pathway porphyrin-containing compound metabolism; chlorophyll biosynthesis. Its function is as follows. Tetrapolymerization of the monopyrrole PBG into the hydroxymethylbilane pre-uroporphyrinogen in several discrete steps. This Synechococcus sp. (strain CC9902) protein is Porphobilinogen deaminase.